The chain runs to 386 residues: MKLSDEDLSRLNEFWLYCSKNQYFNVGYPESADFDYSELEKFMKFSINNCGDWREESNYKLNSFDFEKDVMRYFSQLFNIPHQESWGYISNGGTEGNLFSCYLARELFPTAYLYYSEETHYSVDKIARLLNIPSRKIPALSNGEIDYQQLVTQIERDQQGNPIIFANIGSTMRGAIDDIGRIQNDLATLGLDRKDYYIHADAALSGMILPFVDQPPPYSFQDGIDSITVSGHKMIGSPIPCGIVLAKQHMVDQISVEVDYISSRDQTISGSRNGHSALFMWTAIKSHSLSDWQSKVKLCLDMADYTVQRLQKAGIEAWRNKNSNTVVFPCPSEPIWRKHSLATSGDVAHIVTMPHLNSTAQLDALIDDVIFDLSPEYGLGHVIGQN.

Residue histidine 120 participates in substrate binding. Lysine 233 is modified (N6-(pyridoxal phosphate)lysine).

It belongs to the group II decarboxylase family. In terms of assembly, homotetramer. Requires pyridoxal 5'-phosphate as cofactor.

It catalyses the reaction L-histidine + H(+) = histamine + CO2. The protein is Histidine decarboxylase of Vibrio campbellii (strain ATCC BAA-1116).